The chain runs to 489 residues: IPT/TIG domain-containing protein BACOVA_02650 (489 aa).

Residues 1-27 (MKSIYKYLDTRLFLIGLLVLPFLAVVS) form the signal peptide. Cys-28 carries N-palmitoyl cysteine lipidation. Cys-28 is lipidated: S-diacylglycerol cysteine. 3 IPT/TIG domains span residues 57 to 103 (VNPG…PNEL), 136 to 204 (PYIT…TAPA), and 232 to 304 (PVVT…AIGG).

The protein resides in the cell outer membrane. It participates in glucan metabolism; xyloglucan degradation. Its function is as follows. Polysaccharide-binding protein present at the surface of the cell. Probably mediates xyloglucan-binding before xyloglucan transport in the periplasm for degradation. The polypeptide is IPT/TIG domain-containing protein BACOVA_02650 (Bacteroides ovatus (strain ATCC 8483 / DSM 1896 / JCM 5824 / BCRC 10623 / CCUG 4943 / NCTC 11153)).